Here is a 640-residue protein sequence, read N- to C-terminus: Autophagy-related protein 20 (640 aa).

Polar residues-rich tracts occupy residues 1–18 (MSDL…SETR) and 126–153 (AETC…PSVS). 2 disordered regions span residues 1-63 (MSDL…NNKV) and 126-156 (AETC…SNRK). At S2 the chain carries N-acetylserine. Residues 140-301 (MNGETSASEE…DFLDPNNHNW (162 aa)) enclose the PX domain. A 1,2-diacyl-sn-glycero-3-phospho-(1D-myo-inositol-3-phosphate) is bound by residues R192, S194, K218, and R267. A phosphoserine mark is found at S361 and S363. Coiled coils occupy residues 475-512 (LQNE…DNEM) and 562-593 (TASI…KVIK).

The protein belongs to the sorting nexin family. Forms a complex with SNX4 and ATG17.

Its subcellular location is the endosome membrane. It is found in the preautophagosomal structure membrane. In terms of biological role, required for cytoplasm to vacuole transport (Cvt), pexophagy and mitophagy. Also involved in endoplasmic reticulum-specific autophagic process and is essential for the survival of cells subjected to severe ER stress. Functions in protein retrieval from the endocytic pathway. Required for proper sorting of the v-SNARE protein SNC1. This is Autophagy-related protein 20 (ATG20) from Saccharomyces cerevisiae (strain ATCC 204508 / S288c) (Baker's yeast).